We begin with the raw amino-acid sequence, 99 residues long: Ferredoxin-2 (99 aa).

The 2Fe-2S ferredoxin-type domain occupies 4-96 (YQVRLINKKR…DCTIRTHQEA (93 aa)). [2Fe-2S] cluster is bound by residues cysteine 42, cysteine 47, cysteine 50, and cysteine 80.

The protein belongs to the 2Fe2S plant-type ferredoxin family. [2Fe-2S] cluster is required as a cofactor.

Ferredoxins are iron-sulfur proteins that transfer electrons in a wide variety of metabolic reactions. Donates electrons to the nitrogenase. This is Ferredoxin-2 (fdxH) from Leptolyngbya boryana (Plectonema boryanum).